The following is a 593-amino-acid chain: Mitoguardin 2 (593 aa).

The next 2 helical transmembrane spans lie at 11 to 31 (MIQA…TTFG) and 42 to 62 (PGLR…ALAA). Disordered regions lie at residues 101–134 (KKGY…HSGS) and 195–228 (LSVG…EPES). The span at 107–123 (RRVQSPSSKSNDTLSGI) shows a compositional bias: polar residues. Low complexity predominate over residues 124–134 (SSIEPSKHSGS). The residue at position 132 (S132) is a Phosphoserine. A Phosphothreonine modification is found at T206. Phosphoserine is present on residues S220, S224, and S228. T273 bears the Phosphothreonine mark. Residues S276 and S295 each carry the phosphoserine modification. The short motif at 292–298 (SFFSATE) is the FFAT element. The chain crosses the membrane as a helical span at residues 563–583 (ILLGYLGVPAASSIGLNGVLP).

Belongs to the mitoguardin family. Homodimer and heterodimer; forms heterodimers with MIGA1. Interacts with PLD6/MitoPLD. Interacts (via phosphorylated FFAT motif) with MOSPD2. In terms of processing, phosphorylation at Ser-295 of the FFAT motif activates interaction with MOSPD2.

The protein localises to the mitochondrion outer membrane. Regulator of mitochondrial fusion: acts by forming homo- and heterodimers at the mitochondrial outer membrane and facilitating the formation of PLD6/MitoPLD dimers. May act by regulating phospholipid metabolism via PLD6/MitoPLD. This chain is Mitoguardin 2, found in Bos taurus (Bovine).